The sequence spans 41 residues: Competence-stimulating peptide type 1 (41 aa).

Residues 1–24 (MKNTVKLEQFVALKEKDLQKIKGG) constitute a propeptide that is removed on maturation.

It belongs to the ComC family.

Its subcellular location is the secreted. In terms of biological role, acts as a pheromone, induces cells to develop competence for genetic transformation. This chain is Competence-stimulating peptide type 1 (comC1), found in Streptococcus pneumoniae.